Reading from the N-terminus, the 371-residue chain is Phospho-N-acetylmuramoyl-pentapeptide-transferase (371 aa).

A run of 11 helical transmembrane segments spans residues 21 to 41 (NHIL…DFYY), 46 to 66 (LTIP…IGIP), 92 to 112 (PTMG…ILYF), 119 to 139 (IILT…IDDF), 156 to 176 (ILLQ…NNLI), 182 to 202 (IANK…FVLL), 216 to 236 (GLLS…ILIE), 241 to 261 (NSTL…FLFL), 268 to 288 (LFMG…IALI), 296 to 316 (LIMG…VSIF), and 349 to 369 (IVSS…IFLI).

It belongs to the glycosyltransferase 4 family. MraY subfamily. It depends on Mg(2+) as a cofactor.

The protein localises to the cell inner membrane. It carries out the reaction UDP-N-acetyl-alpha-D-muramoyl-L-alanyl-gamma-D-glutamyl-meso-2,6-diaminopimeloyl-D-alanyl-D-alanine + di-trans,octa-cis-undecaprenyl phosphate = di-trans,octa-cis-undecaprenyl diphospho-N-acetyl-alpha-D-muramoyl-L-alanyl-D-glutamyl-meso-2,6-diaminopimeloyl-D-alanyl-D-alanine + UMP. Its pathway is cell wall biogenesis; peptidoglycan biosynthesis. Functionally, catalyzes the initial step of the lipid cycle reactions in the biosynthesis of the cell wall peptidoglycan: transfers peptidoglycan precursor phospho-MurNAc-pentapeptide from UDP-MurNAc-pentapeptide onto the lipid carrier undecaprenyl phosphate, yielding undecaprenyl-pyrophosphoryl-MurNAc-pentapeptide, known as lipid I. This chain is Phospho-N-acetylmuramoyl-pentapeptide-transferase, found in Prochlorococcus marinus (strain NATL2A).